The sequence spans 327 residues: MQHLDEIIANATAEIEQAGSLVALDEVRVQYLGKKGHLTLQLQGLGKLDPSERREAGQLINKGKQAVQAMLTERKDALQTAELEAKLAAETIDVSLPGRRIENGGLHPVTRTVERIEQFFGELGFSTESGPEIEDAFHNFDALNIAEDHPARTDHDTFFFNPDLMLRTHTSGVQIRTMENGKPPFRFIAPGRVYRNDYDQTHTPMFHQVEGMLVDENVNFAQLKGILHDFLCNFFEEEVEVRFRPSFFPFTEPSAEVDVKRKDGKWLEVLGCGMVHPNVLRSVGIDPEKYSGFAFGMGVERLTMLRYGVNDLRAFFENDLRFLKQFK.

Glu-252 provides a ligand contact to Mg(2+).

It belongs to the class-II aminoacyl-tRNA synthetase family. Phe-tRNA synthetase alpha subunit type 1 subfamily. As to quaternary structure, tetramer of two alpha and two beta subunits. The cofactor is Mg(2+).

The protein localises to the cytoplasm. The enzyme catalyses tRNA(Phe) + L-phenylalanine + ATP = L-phenylalanyl-tRNA(Phe) + AMP + diphosphate + H(+). This Aliivibrio fischeri (strain ATCC 700601 / ES114) (Vibrio fischeri) protein is Phenylalanine--tRNA ligase alpha subunit.